Reading from the N-terminus, the 311-residue chain is Homoserine kinase (311 aa).

88 to 98 serves as a coordination point for ATP; it reads PEGLGLGSSGA.

The protein belongs to the GHMP kinase family. Homoserine kinase subfamily.

The protein localises to the cytoplasm. It catalyses the reaction L-homoserine + ATP = O-phospho-L-homoserine + ADP + H(+). It participates in amino-acid biosynthesis; L-threonine biosynthesis; L-threonine from L-aspartate: step 4/5. In terms of biological role, catalyzes the ATP-dependent phosphorylation of L-homoserine to L-homoserine phosphate. This chain is Homoserine kinase, found in Saccharolobus islandicus (strain Y.N.15.51 / Yellowstone #2) (Sulfolobus islandicus).